Consider the following 210-residue polypeptide: uncharacterized protein (210 aa).

Residues 4-180 (RKVYLYVFHT…AVEVLKKLDV (177 aa)) form the PfpI endopeptidase domain. The active-site Nucleophile is the Cys110.

The protein belongs to the peptidase C56 family.

This is an uncharacterized protein from Bacillus subtilis (strain 168).